The primary structure comprises 742 residues: MMGTAHHNQTAGSALGVGVGDANDAVPGAGGGGYSDPDGGPISGVQRPPQVCWERFIQKKTIKVLLVDSDDSTRQVVSALLRHCMYEVIPAENGQQAWTYLEDMQNSIDLVLTEVVMPGVSGISLLSRIMNHNICKNIPVIMMSSNDAMGTVFKCLSKGAVDFLVKPIRKNELKNLWQHVWRRCHSSSGSGSESGIQTQKCAKSKSGDESNNNNGSNDDDDDDGVIMGLNARDGSDNGSGTQAQSSWTKRAVEIDSPQAMSPDQLADPPDSTCAQVIHLKSDICSNRWLPCTSNKNSKKQKETNDDFKGKDLEIGSPRNLNTAYQSSPNERSIKPTDRRNEYPLQNNSKEAAMENLEESSVRAADLIGSMAKNMDAQQAARAANAPNCSSKVPEGKDKNRDNIMPSLELSLKRSRSTGDGANAIQEEQRNVLRRSDLSAFTRYHTPVASNQGGTGFMGSCSLHDNSSEAMKTDSAYNMKSNSDAAPIKQGSNGSSNNNDMGSTTKNVVTKPSTNKERVMSPSAVKANGHTSAFHPAQHWTSPANTTGKEKTDEVANNAAKRAQPGEVQSNLVQHPRPILHYVHFDVSRENGGSGAPQCGSSNVFDPPVEGHAANYGVNGSNSGSNNGSNGQNGSTTAVNAERPNMEIANGTINKSGPGGGNGSGSGSGNDMYLKRFTQREHRVAAVIKFRQKRKERNFGKKVRYQSRKRLAEQRPRVRGQFVRQAVQDQQQQGGGREAAADR.

Residues 63–181 (KVLLVDSDDS…ELKNLWQHVW (119 aa)) enclose the Response regulatory domain. Residues 186–195 (SSSGSGSESG) are compositionally biased toward low complexity. Disordered regions lie at residues 186-249 (SSSG…SWTK), 290-346 (PCTS…PLQN), 377-402 (QQAARAANAPNCSSKVPEGKDKNRDN), 478-517 (MKSNSDAAPIKQGSNGSSNNNDMGSTTKNVVTKPSTNKER), 533-568 (FHPAQHWTSPANTTGKEKTDEVANNAAKRAQPGEVQ), 590-671 (NGGS…GNDM), and 697-742 (NFGK…AADR). Residues 236–248 (DNGSGTQAQSSWT) are compositionally biased toward polar residues. Over residues 299-313 (KQKETNDDFKGKDLE) the composition is skewed to basic and acidic residues. The span at 318–330 (RNLNTAYQSSPNE) shows a compositional bias: polar residues. A compositionally biased stretch (basic and acidic residues) spans 331 to 341 (RSIKPTDRRNE). Low complexity predominate over residues 490-502 (GSNGSSNNNDMGS). The span at 503-512 (TTKNVVTKPS) shows a compositional bias: polar residues. The segment covering 618 to 634 (NGSNSGSNNGSNGQNGS) has biased composition (low complexity). A compositionally biased stretch (gly residues) spans 656–667 (GPGGGNGSGSGS). The CCT domain maps to 682–724 (RVAAVIKFRQKRKERNFGKKVRYQSRKRLAEQRPRVRGQFVRQ). Over residues 697–708 (NFGKKVRYQSRK) the composition is skewed to basic residues. Positions 719-731 (GQFVRQAVQDQQQ) are enriched in low complexity.

It belongs to the ARR-like family.

It localises to the nucleus. In terms of biological role, probable transcription factor involved in the regulation of flowering time under long day (LD) conditions. Functions as a repressor of flowering. Controls flowering time by negatively regulating the expression of HD3A. Acts downstream of the phytochrome B to repress the expression of EHD1, an activator of the flowering promoter genes HD3A and RFT1. Controls photoperiodic flowering response. Seems to be one of the component of the circadian clock. Expression of several members of the ARR-like family is controlled by circadian rhythm. The particular coordinated sequential expression of PRR73, PRR37, PRR95, PRR59 and PPR1 result to circadian waves that may be at the basis of the endogenous circadian clock. The protein is Two-component response regulator-like PRR37 of Oryza sativa subsp. japonica (Rice).